We begin with the raw amino-acid sequence, 947 residues long: Protein NLP8 (947 aa).

Disordered stretches follow at residues 114-135, 509-533, and 550-591; these read RSSAQEMNSQFHRSSDSDELSG, STKKEGTKPGFRSSDMSNFPQTTSS, and SMFS…EKNV. Residues 126 to 135 show a composition bias toward basic and acidic residues; the sequence is RSSDSDELSG. Composition is skewed to polar residues over residues 522 to 533 and 550 to 572; these read SDMSNFPQTTSS and SMFSGMSSDKENSITVSQGTLEQ. A compositionally biased stretch (basic and acidic residues) spans 573 to 587; the sequence is DVSKARTPEKKKSTT. The RWP-RK domain occupies 577 to 671; it reads ARTPEKKKST…LDSVQGVEGG (95 aa). Residues 646 to 666 adopt a coiled-coil conformation; it reads RKINKVNRSLRKIQTVLDSVQ. Residues 805–815 are compositionally biased toward low complexity; sequence SCSISDSSNGS. Residues 805–828 are disordered; sequence SCSISDSSNGSGAVLRGSSSTSME. The 83-residue stretch at 847-929 folds into the PB1 domain; sequence TLIVKASYRE…HSVKFLVRDL (83 aa).

It is found in the nucleus. Its function is as follows. Probable transcription factor. In Arabidopsis thaliana (Mouse-ear cress), this protein is Protein NLP8 (NLP8).